The sequence spans 382 residues: 2-carboxy-1,4-naphthoquinone phytyltransferase, chloroplastic (382 aa).

The transit peptide at 1 to 66 (MVNFVSLCDI…RRNLRVRPIF (66 aa)) directs the protein to the chloroplast. A run of 8 helical transmembrane segments spans residues 99–119 (VALV…GLFL), 123–143 (YVTL…SNDV), 168–188 (TLAA…WTSL), 196–216 (ILLL…PFRL), 224–244 (PLCF…LLGS), 257–277 (VLSS…CSHF), 323–343 (ILPL…NLVS), and 361–381 (YYCV…LVIA).

The protein belongs to the MenA family. Type 2 subfamily.

It is found in the plastid. The protein localises to the chloroplast membrane. It catalyses the reaction 2-carboxy-1,4-naphthoquinone + phytyl diphosphate + H(+) = demethylphylloquinone + CO2 + diphosphate. Functionally, involved in the synthesis of phylloquinone (vitamin K1). Catalyzes the transfer of a prenyl chain to 2-carboxy-1,4-naphthoquinone. In Arabidopsis thaliana (Mouse-ear cress), this protein is 2-carboxy-1,4-naphthoquinone phytyltransferase, chloroplastic (ABC4).